Reading from the N-terminus, the 689-residue chain is tRNA 5-methylaminomethyl-2-thiouridine biosynthesis bifunctional protein MnmC (689 aa).

The tRNA (mnm(5)s(2)U34)-methyltransferase stretch occupies residues 1-245; it reads MNQRPIQTAT…KREMLTGTLP (245 aa). Residues 270–689 are FAD-dependent cmnm(5)s(2)U34 oxidoreductase; it reads IGGGIVSALT…RSPATQESSR (420 aa).

The protein in the N-terminal section; belongs to the methyltransferase superfamily. tRNA (mnm(5)s(2)U34)-methyltransferase family. In the C-terminal section; belongs to the DAO family. FAD is required as a cofactor.

Its subcellular location is the cytoplasm. The enzyme catalyses 5-aminomethyl-2-thiouridine(34) in tRNA + S-adenosyl-L-methionine = 5-methylaminomethyl-2-thiouridine(34) in tRNA + S-adenosyl-L-homocysteine + H(+). Catalyzes the last two steps in the biosynthesis of 5-methylaminomethyl-2-thiouridine (mnm(5)s(2)U) at the wobble position (U34) in tRNA. Catalyzes the FAD-dependent demodification of cmnm(5)s(2)U34 to nm(5)s(2)U34, followed by the transfer of a methyl group from S-adenosyl-L-methionine to nm(5)s(2)U34, to form mnm(5)s(2)U34. The chain is tRNA 5-methylaminomethyl-2-thiouridine biosynthesis bifunctional protein MnmC from Yersinia pestis.